The sequence spans 99 residues: uncharacterized protein (99 aa).

The signal sequence occupies residues 1–17 (MMMNAFFPAMALIVLVG). A lipid anchor (N-palmitoyl cysteine) is attached at Cys-18. Cys-18 carries the S-diacylglycerol cysteine lipid modification.

It is found in the cell membrane. This is an uncharacterized protein from Escherichia coli (strain UTI89 / UPEC).